A 111-amino-acid chain; its full sequence is Small ribosomal subunit protein bS16 (111 aa).

The protein belongs to the bacterial ribosomal protein bS16 family.

The polypeptide is Small ribosomal subunit protein bS16 (Rickettsia typhi (strain ATCC VR-144 / Wilmington)).